Reading from the N-terminus, the 580-residue chain is Laccase-6 (580 aa).

The signal sequence occupies residues 1–22 (MSCSWMIPVFAILAFVASAAQA). Plastocyanin-like domains are found at residues 30-148 (NVAT…PRRA) and 158-317 (EEKT…YVDA). 2 N-linked (GlcNAc...) asparagine glycosylation sites follow: Asn44 and Asn78. His82, His84, His127, and His129 together coordinate Cu cation. N-linked (GlcNAc...) asparagine glycans are attached at residues Asn306, Asn335, Asn385, Asn397, and Asn462. A Plastocyanin-like 3 domain is found at 424–564 (DFPDQPPVAF…AMVFEVESGP (141 aa)). Residues His480, His483, His485, His543, Cys544, His545, and His549 each contribute to the Cu cation site.

It belongs to the multicopper oxidase family. The cofactor is Cu cation.

The protein resides in the secreted. Its subcellular location is the extracellular space. It is found in the apoplast. The enzyme catalyses 4 hydroquinone + O2 = 4 benzosemiquinone + 2 H2O. Its function is as follows. Lignin degradation and detoxification of lignin-derived products. The chain is Laccase-6 (LAC6) from Oryza sativa subsp. japonica (Rice).